The sequence spans 297 residues: N-acetylmuramic acid 6-phosphate etherase (297 aa).

Positions alanine 55–lysine 218 constitute an SIS domain. The active-site Proton donor is the glutamate 83. Residue glutamate 114 is part of the active site.

It belongs to the GCKR-like family. MurNAc-6-P etherase subfamily. In terms of assembly, homodimer.

It catalyses the reaction N-acetyl-D-muramate 6-phosphate + H2O = N-acetyl-D-glucosamine 6-phosphate + (R)-lactate. The protein operates within amino-sugar metabolism; 1,6-anhydro-N-acetylmuramate degradation. It functions in the pathway amino-sugar metabolism; N-acetylmuramate degradation. Its pathway is cell wall biogenesis; peptidoglycan recycling. Specifically catalyzes the cleavage of the D-lactyl ether substituent of MurNAc 6-phosphate, producing GlcNAc 6-phosphate and D-lactate. Together with AnmK, is also required for the utilization of anhydro-N-acetylmuramic acid (anhMurNAc) either imported from the medium or derived from its own cell wall murein, and thus plays a role in cell wall recycling. The chain is N-acetylmuramic acid 6-phosphate etherase from Serratia proteamaculans (strain 568).